We begin with the raw amino-acid sequence, 448 residues long: Vimentin (448 aa).

Residues 1–77 (PRHLEPAGSN…FSLADAINTE (77 aa)) are head. Serine 9 is subject to Phosphoserine. Threonine 16 is a glycosylation site (O-linked (GlcNAc) threonine). Serine 17 is subject to Phosphoserine; by PKC; alternate. An O-linked (GlcNAc) serine; alternate glycan is attached at serine 17. Serine 22 bears the Phosphoserine; by CaMK2, PKA, PKC and ROCK2 mark. 3 positions are modified to phosphoserine: serine 29, serine 31, and serine 33. Residue tyrosine 35 is modified to Phosphotyrosine. At serine 37 the chain carries Phosphoserine. Phosphoserine; by CDK5 and CDK1 is present on serine 38. Tyrosine 43 carries the post-translational modification Phosphotyrosine. Phosphoserine; by PKA and PKC is present on serine 48. Residue serine 54 is modified to Phosphoserine; by AURKB and ROCK2. Position 55 is a phosphoserine (serine 55). Serine 65 bears the Phosphoserine; by CaMK2 mark. Phosphoserine is present on serine 69. The segment at 78 to 113 (FKNTRTNEKVELQELNDRFADYIDKVRFLEQQNKIL) is coil 1A. A coiled-coil region spans residues 78-113 (FKNTRTNEKVELQELNDRFADYIDKVRFLEQQNKIL). The 309-residue stretch at 85–393 (EKVELQELND…KLLEGEESRI (309 aa)) folds into the IF rod domain. Residue lysine 86 forms a Glycyl lysine isopeptide (Lys-Gly) (interchain with G-Cter in SUMO2) linkage. Tyrosine 99 carries the post-translational modification Phosphotyrosine. N6-acetyllysine; alternate occurs at positions 102, 111, and 121. N6-succinyllysine; alternate occurs at positions 102 and 111. Residues lysine 102, lysine 111, and lysine 121 each participate in a glycyl lysine isopeptide (Lys-Gly) (interchain with G-Cter in SUMO2); alternate cross-link. Positions 114–135 (LAELEQLKGQGKSRLGDLYEEE) are linker 1. Position 126 is a phosphoserine (serine 126). Residues 136 to 227 (MRELRRQVDQ…KLHDEEIQEL (92 aa)) are a coiled coil. Residues 136–227 (MRELRRQVDQ…KLHDEEIQEL (92 aa)) are coil 1B. Lysine 150 bears the N6-acetyllysine mark. Lysine 170 bears the N6-acetyllysine; alternate mark. Lysine 170 carries the post-translational modification N6-succinyllysine; alternate. Phosphoserine is present on serine 196. Lysine 205 is subject to N6-acetyllysine; alternate. A Glycyl lysine isopeptide (Lys-Gly) (interchain with G-Cter in SUMO2); alternate cross-link involves residue lysine 205. At serine 208 the chain carries Phosphoserine. N6-acetyllysine is present on lysine 217. The tract at residues 228-250 (QAQIQEQHVQIDVDVSKPDLTAA) is linker 12. Lysine 244 participates in a covalent cross-link: Glycyl lysine isopeptide (Lys-Gly) (interchain with G-Cter in SUMO2). Positions 251-389 (LRDVRQQYES…ATYRKLLEGE (139 aa)) are coil 2. Lysine 276 is subject to N6-acetyllysine; alternate. Lysine 276 carries the N6-succinyllysine; alternate modification. Lysine 276 is covalently cross-linked (Glycyl lysine isopeptide (Lys-Gly) (interchain with G-Cter in SUMO2); alternate). Serine 281 is subject to Phosphoserine. Residues 285 to 389 (NRNNDALRQA…ATYRKLLEGE (105 aa)) adopt a coiled-coil conformation. Lysine 295 is covalently cross-linked (Glycyl lysine isopeptide (Lys-Gly) (interchain with G-Cter in SUMO2)). Residue serine 307 is modified to Phosphoserine. The short motif at 308-311 (LTCE) is the [IL]-x-C-x-x-[DE] motif element. At lysine 355 the chain carries N6-acetyllysine; alternate. Lysine 355 participates in a covalent cross-link: Glycyl lysine isopeptide (Lys-Gly) (interchain with G-Cter in SUMO2); alternate. The interval 390 to 448 (ESRISLPLPNFSSLNLRETNLESLPLVDTHSKRTLLIKTVETRDGQVINETSQHHDDLE) is tail. Phosphoserine is present on residues serine 391, serine 394, serine 401, and serine 402. Residue threonine 408 is modified to Phosphothreonine. The residue at position 412 (serine 412) is a Phosphoserine. Residue threonine 418 is modified to Phosphothreonine. Serine 420 is subject to Phosphoserine. Lysine 421 participates in a covalent cross-link: Glycyl lysine isopeptide (Lys-Gly) (interchain with G-Cter in SUMO2). At lysine 427 the chain carries N6-acetyllysine; alternate. Lysine 427 bears the N6-succinyllysine; alternate mark. Residue lysine 427 forms a Glycyl lysine isopeptide (Lys-Gly) (interchain with G-Cter in SUMO2); alternate linkage. Lysine 427 is covalently cross-linked (Glycyl lysine isopeptide (Lys-Gly) (interchain with G-Cter in SUMO1); alternate). Phosphothreonine occurs at positions 428 and 440. Phosphoserine is present on serine 441.

It belongs to the intermediate filament family. As to quaternary structure, homomer assembled from elementary dimers. Identified in complexes that contain VIM, EZR, AHNAK, BFSP1, BFSP2, ANK2, PLEC, PRX and spectrin. Interacts with BCAS3. Interacts with LGSN. Interacts with SYNM. Interacts (via rod region) with PLEC (via CH 1 domain). Interacts with STK33. Interacts with LARP6. Interacts with RAB8B. Interacts with TOR1A; the interaction associates TOR1A with the cytoskeleton. Interacts with TOR1AIP1. Interacts with TOR1AIP1. Interacts with DIAPH1. Interacts with EPPK1; interaction is dependent of higher-order structure of intermediate filament. Interacts with the non-receptor tyrosine kinase SRMS; the interaction leads to phosphorylation of VIM. Interacts with NOD2. Interacts (via head region) with CORO1C. Interacts with HDGF. Interacts with PRKCE (via phorbol-ester/DAG-type 2 domain). Interacts with BFSP2. Interacts with PPL. Interacts with PKP1 and PKP2. Interacts with SCRIB (via PDZ domains); the interaction protects SCRIB from proteasomal degradation and facilitates SCRIB localization to intermediate filaments, the interaction is reduced by cell contact inhibition. One of the most prominent phosphoproteins in various cells of mesenchymal origin. Phosphorylation is enhanced during cell division, at which time vimentin filaments are significantly reorganized. Phosphorylation by PKN1 inhibits the formation of filaments. Filament disassembly during mitosis is promoted by phosphorylation at Ser-37 as well as by nestin. Phosphorylated at Ser-38 by CDK5 during neutrophil secretion in the cytoplasm. Phosphorylated by STK33. Phosphorylated on tyrosine residues by SRMS. Post-translationally, S-nitrosylation is induced by interferon-gamma and oxidatively-modified low-densitity lipoprotein (LDL(ox)) possibly implicating the iNOS-S100A8/9 transnitrosylase complex.

The protein localises to the cytoplasm. The protein resides in the cytoskeleton. It localises to the nucleus matrix. It is found in the cell membrane. Vimentins are class-III intermediate filaments found in various non-epithelial cells, especially mesenchymal cells. Vimentin is attached to the nucleus, endoplasmic reticulum, and mitochondria, either laterally or terminally. Plays a role in cell directional movement, orientation, cell sheet organization and Golgi complex polarization at the cell migration front. Protects SCRIB from proteasomal degradation and facilitates its localization to intermediate filaments in a cell contact-mediated manner. In terms of biological role, involved with LARP6 in the stabilization of type I collagen mRNAs for CO1A1 and CO1A2. The chain is Vimentin (VIM) from Cricetulus griseus (Chinese hamster).